A 328-amino-acid polypeptide reads, in one-letter code: Formyltetrahydrofolate deformylase 2, mitochondrial (328 aa).

The N-terminal 12 residues, 1–12 (MIRRVSTTSCLS), are a transit peptide targeting the mitochondrion. The region spanning 46-129 (FHVFHCPDVV…SVVRVPSLDP (84 aa)) is the ACT domain. The active site involves aspartate 272.

Belongs to the PurU family. As to expression, expressed in leaves, cotyledons, roots, seeds and flowers.

Its subcellular location is the mitochondrion. It carries out the reaction (6R)-10-formyltetrahydrofolate + H2O = (6S)-5,6,7,8-tetrahydrofolate + formate + H(+). Its function is as follows. Deformylase involved in photorespiration. Prevents excessive accumulation of 5-formyl tetrahydrofolate (THF), a potent inhibitor of the Gly decarboxylase/Ser hydroxymethyltransferase complex. The protein is Formyltetrahydrofolate deformylase 2, mitochondrial (PURU2) of Arabidopsis thaliana (Mouse-ear cress).